The following is a 334-amino-acid chain: UDP-N-acetylenolpyruvoylglucosamine reductase (334 aa).

Residues 16 to 186 form the FAD-binding PCMH-type domain; the sequence is INVFAKKIII…LSVGIKLPKT (171 aa). The active site involves Arg-162. Catalysis depends on Ser-232, which acts as the Proton donor. Glu-329 is an active-site residue.

This sequence belongs to the MurB family. The cofactor is FAD.

Its subcellular location is the cytoplasm. The enzyme catalyses UDP-N-acetyl-alpha-D-muramate + NADP(+) = UDP-N-acetyl-3-O-(1-carboxyvinyl)-alpha-D-glucosamine + NADPH + H(+). The protein operates within cell wall biogenesis; peptidoglycan biosynthesis. Its function is as follows. Cell wall formation. The protein is UDP-N-acetylenolpyruvoylglucosamine reductase of Buchnera aphidicola subsp. Baizongia pistaciae (strain Bp).